The primary structure comprises 591 residues: DEAD-box ATP-dependent RNA helicase 30 (591 aa).

The tract at residues 1-109 (MSSYDRRFAD…GRGGSSKREL (109 aa)) is disordered. Residues 72 to 103 (FSVGRGGGRGGYGQYGDRNGGGNWGGGGGRGG) are compositionally biased toward gly residues. Residues 165–193 (KMFQDANFPDNILEAIAKLGFTEPTPIQA) carry the Q motif motif. In terms of domain architecture, Helicase ATP-binding spans 196 to 371 (WPMALKGRDL…RQFLRDPYKA (176 aa)). 209-216 (AETGSGKT) contacts ATP. A DEAD box motif is present at residues 319 to 322 (DEAD). The Helicase C-terminal domain occupies 399–544 (RLLTLLKQLM…VVPPTLSALV (146 aa)). The disordered stretch occupies residues 547 to 591 (SGSGYGGSGGGRNFRPRGGGRGGGFGDKRSRSTSNFVPHGGKRTW). Positions 549–571 (SGYGGSGGGRNFRPRGGGRGGGF) are enriched in gly residues.

Belongs to the DEAD box helicase family. DDX5/DBP2 subfamily.

The protein resides in the nucleus. The catalysed reaction is ATP + H2O = ADP + phosphate + H(+). In terms of biological role, ATP-dependent RNA helicase involved nonsense-mediated mRNA decay and ribosome biogenesis through rRNA processing. In Arabidopsis thaliana (Mouse-ear cress), this protein is DEAD-box ATP-dependent RNA helicase 30 (RH30).